The chain runs to 90 residues: Protein Z600 (90 aa).

A phosphothreonine mark is found at Thr22 and Thr48. Residues 46 to 65 form a disordered region; the sequence is PATPSSSGHGKFQTELKKRR.

Component of the Frs-CycA-Cdk1 complex composed of Z600, CycA and Cdk1. Interacts preferentially with CycA (via C-terminus) but is also able to interact (via C-terminus) with CycE (via C-terminus).

The protein resides in the nucleus. Functionally, cell cycle regulator that is involved in modulating and adjusting cell proliferation according to the requirements of the developmental program. Interacts with mitotic Cdk1-cyclin complexes to inhibit mitotic entry at the G2/M transition. Likely to function by binding to the hydrophobic patch of cyclins to interfere with the interaction between the complex and certain Cdk1 substrates. At the mid-blastula transition, involved in the cell cycle arrest in G2 of cycle 14 by delaying mitosis and thus reducing cell proliferation allowing cell fate specification and morphogenesis to take place. Acts downstream or in parallel to the checkpoint regulator grp which is also required for the cell cycle pause at cycle 14. During gastrulation, delays mitosis in the ventral region of the embryonic mesoderm thus allowing invagination to be completed before cell division takes place. The chain is Protein Z600 from Drosophila melanogaster (Fruit fly).